The primary structure comprises 430 residues: Hydrogenobyrinate a,c-diamide synthase (430 aa).

The region spanning 239 to 422 is the GATase cobBQ-type domain; sequence RIGVARDAAF…IHFYLPSDPL (184 aa). The active-site Nucleophile is Cys-321.

The protein belongs to the CobB/CbiA family. Mg(2+) serves as cofactor.

The catalysed reaction is hydrogenobyrinate + 2 L-glutamine + 2 ATP + 2 H2O = hydrogenobyrinate a,c-diamide + 2 L-glutamate + 2 ADP + 2 phosphate + 2 H(+). It participates in cofactor biosynthesis; adenosylcobalamin biosynthesis; cob(II)yrinate a,c-diamide from precorrin-2 (aerobic route): step 9/10. Its function is as follows. Catalyzes the ATP-dependent amidation of the two carboxylate groups at positions a and c of hydrogenobyrinate, using either L-glutamine or ammonia as the nitrogen source. The chain is Hydrogenobyrinate a,c-diamide synthase from Stutzerimonas stutzeri (strain A1501) (Pseudomonas stutzeri).